Consider the following 621-residue polypeptide: tRNA uridine 5-carboxymethylaminomethyl modification enzyme MnmG (621 aa).

Gly9 to Gly14 contributes to the FAD binding site. Gly270 to Phe284 provides a ligand contact to NAD(+).

This sequence belongs to the MnmG family. Homodimer. Heterotetramer of two MnmE and two MnmG subunits. The cofactor is FAD.

The protein localises to the cytoplasm. Its function is as follows. NAD-binding protein involved in the addition of a carboxymethylaminomethyl (cmnm) group at the wobble position (U34) of certain tRNAs, forming tRNA-cmnm(5)s(2)U34. This is tRNA uridine 5-carboxymethylaminomethyl modification enzyme MnmG from Borrelia garinii subsp. bavariensis (strain ATCC BAA-2496 / DSM 23469 / PBi) (Borreliella bavariensis).